Consider the following 503-residue polypeptide: ATP synthase subunit alpha (503 aa).

169–176 (GDRQTGKT) lines the ATP pocket.

This sequence belongs to the ATPase alpha/beta chains family. In terms of assembly, F-type ATPases have 2 components, CF(1) - the catalytic core - and CF(0) - the membrane proton channel. CF(1) has five subunits: alpha(3), beta(3), gamma(1), delta(1), epsilon(1). CF(0) has three main subunits: a(1), b(2) and c(9-12). The alpha and beta chains form an alternating ring which encloses part of the gamma chain. CF(1) is attached to CF(0) by a central stalk formed by the gamma and epsilon chains, while a peripheral stalk is formed by the delta and b chains.

Its subcellular location is the cell membrane. The enzyme catalyses ATP + H2O + 4 H(+)(in) = ADP + phosphate + 5 H(+)(out). Its function is as follows. Produces ATP from ADP in the presence of a proton gradient across the membrane. The alpha chain is a regulatory subunit. This is ATP synthase subunit alpha from Macrococcus caseolyticus (strain JCSC5402) (Macrococcoides caseolyticum).